Here is a 484-residue protein sequence, read N- to C-terminus: Aspartyl/glutamyl-tRNA(Asn/Gln) amidotransferase subunit B (484 aa).

The protein belongs to the GatB/GatE family. GatB subfamily. As to quaternary structure, heterotrimer of A, B and C subunits.

The enzyme catalyses L-glutamyl-tRNA(Gln) + L-glutamine + ATP + H2O = L-glutaminyl-tRNA(Gln) + L-glutamate + ADP + phosphate + H(+). The catalysed reaction is L-aspartyl-tRNA(Asn) + L-glutamine + ATP + H2O = L-asparaginyl-tRNA(Asn) + L-glutamate + ADP + phosphate + 2 H(+). Functionally, allows the formation of correctly charged Asn-tRNA(Asn) or Gln-tRNA(Gln) through the transamidation of misacylated Asp-tRNA(Asn) or Glu-tRNA(Gln) in organisms which lack either or both of asparaginyl-tRNA or glutaminyl-tRNA synthetases. The reaction takes place in the presence of glutamine and ATP through an activated phospho-Asp-tRNA(Asn) or phospho-Glu-tRNA(Gln). In Bordetella parapertussis (strain 12822 / ATCC BAA-587 / NCTC 13253), this protein is Aspartyl/glutamyl-tRNA(Asn/Gln) amidotransferase subunit B.